A 203-amino-acid chain; its full sequence is ATP-dependent Clp protease proteolytic subunit (203 aa).

Ser-100 (nucleophile) is an active-site residue. His-125 is an active-site residue.

The protein belongs to the peptidase S14 family. As to quaternary structure, component of the chloroplastic Clp protease core complex.

The protein localises to the plastid. It localises to the chloroplast stroma. The catalysed reaction is Hydrolysis of proteins to small peptides in the presence of ATP and magnesium. alpha-casein is the usual test substrate. In the absence of ATP, only oligopeptides shorter than five residues are hydrolyzed (such as succinyl-Leu-Tyr-|-NHMec, and Leu-Tyr-Leu-|-Tyr-Trp, in which cleavage of the -Tyr-|-Leu- and -Tyr-|-Trp bonds also occurs).. Its function is as follows. Cleaves peptides in various proteins in a process that requires ATP hydrolysis. Has a chymotrypsin-like activity. Plays a major role in the degradation of misfolded proteins. This is ATP-dependent Clp protease proteolytic subunit from Dioscorea elephantipes (Elephant's foot yam).